Here is a 909-residue protein sequence, read N- to C-terminus: ABC transporter B family member 1 (909 aa).

The interval 1-36 is disordered; the sequence is MTKKNFNDEENESLLETYNKQQQKQSISTTNRSDQK. Residues 14–36 are compositionally biased toward polar residues; that stretch reads LLETYNKQQQKQSISTTNRSDQK. Residues 85-105 traverse the membrane as a helical segment; that stretch reads LFIQIVSLVILAGYLISINAL. Residues 125–134 are compositionally biased toward low complexity; that stretch reads TDSGSVSPTS. The tract at residues 125-147 is disordered; it reads TDSGSVSPTSTPSPTPTPTPSPT. A compositionally biased stretch (pro residues) spans 135–145; it reads TPSPTPTPTPS. 8 consecutive transmembrane segments (helical) span residues 182–202, 206–226, 275–295, 347–367, 392–412, 480–500, 572–592, and 607–627; these read FSTF…LLLI, SFIY…YNVI, IIIV…VLHI, LPII…SLAM, LALV…SWLF, VILL…IVPV, GVFS…IVYV, and LTSF…ISSL. The ABC transmembrane type-1 domain maps to 350-633; the sequence is ILAAMVALVF…ISSLMTDFLK (284 aa). Positions 666 to 902 constitute an ABC transporter domain; that stretch reads IELKDVEFSY…TDGIYHNLVK (237 aa). 701-708 is a binding site for ATP; it reads GPSGGGKS.

It belongs to the ABC transporter superfamily. ABCB family.

Its subcellular location is the membrane. This chain is ABC transporter B family member 1 (abcB1), found in Dictyostelium discoideum (Social amoeba).